The sequence spans 98 residues: NADH-ubiquinone oxidoreductase chain 4L (98 aa).

3 helical membrane-spanning segments follow: residues 1-21, 28-48, and 61-81; these read MASI…GVLI, STLL…TLLI, and LILL…LVTI.

The protein belongs to the complex I subunit 4L family. Core subunit of respiratory chain NADH dehydrogenase (Complex I) which is composed of 45 different subunits.

Its subcellular location is the mitochondrion inner membrane. The enzyme catalyses a ubiquinone + NADH + 5 H(+)(in) = a ubiquinol + NAD(+) + 4 H(+)(out). In terms of biological role, core subunit of the mitochondrial membrane respiratory chain NADH dehydrogenase (Complex I) which catalyzes electron transfer from NADH through the respiratory chain, using ubiquinone as an electron acceptor. Part of the enzyme membrane arm which is embedded in the lipid bilayer and involved in proton translocation. The polypeptide is NADH-ubiquinone oxidoreductase chain 4L (MT-ND4L) (Thylamys elegans (Elegant fat-tailed mouse opossum)).